The following is a 238-amino-acid chain: Zinc import ATP-binding protein ZnuC (238 aa).

The ABC transporter domain occupies 5–220 (IQLNNISVNF…SEFIAIFGNI (216 aa)). 37-44 (GPNGAGKS) lines the ATP pocket.

The protein belongs to the ABC transporter superfamily. Zinc importer (TC 3.A.1.15.5) family. In terms of assembly, the complex is composed of two ATP-binding proteins (ZnuC), two transmembrane proteins (ZnuB) and a solute-binding protein (ZnuA).

Its subcellular location is the cell membrane. The catalysed reaction is Zn(2+)(out) + ATP(in) + H2O(in) = Zn(2+)(in) + ADP(in) + phosphate(in) + H(+)(in). Functionally, part of the ABC transporter complex ZnuABC involved in zinc import. Responsible for energy coupling to the transport system. The polypeptide is Zinc import ATP-binding protein ZnuC (Buchnera aphidicola subsp. Baizongia pistaciae (strain Bp)).